Here is a 201-residue protein sequence, read N- to C-terminus: Ependymin-related protein 2 (201 aa).

A signal peptide spans 1-21; that stretch reads MILQVVLLLACLSGAIVSTGA. Asparagine 38 and asparagine 137 each carry an N-linked (GlcNAc...) asparagine glycan. A Microbody targeting signal motif is present at residues 199-201; sequence CRA.

This sequence belongs to the ependymin family. As to expression, component of the acid-soluble and acid-insoluble organic matrix of calcified shell layers (at protein level).

The protein localises to the secreted. In Haliotis asinina (Donkey's ear abalone), this protein is Ependymin-related protein 2.